The sequence spans 169 residues: MAQGDDSKQAIAQIIRQEQALIFPSFDENEAFALGHRIRDIAVKEKLGIATEISLWDRQLFYATTAGSTVDNQEWLRRKFNVVRRFHASTYRLVLEQNRDDRMFALHKALNVEDYALAGGGFPIRVAGAGVIGAVIVSGLPQREDHNLVIRAVAEHLGQDPVALALPAV.

The protein belongs to the UPF0303 family.

This is UPF0303 protein Oant_1766 from Brucella anthropi (strain ATCC 49188 / DSM 6882 / CCUG 24695 / JCM 21032 / LMG 3331 / NBRC 15819 / NCTC 12168 / Alc 37) (Ochrobactrum anthropi).